The primary structure comprises 205 residues: uncharacterized protein (205 aa).

Residues 1-19 form the signal peptide; sequence MKTLCVLSIFLALLGGLCT. The span at 40-133 shows a compositional bias: low complexity; the sequence is VSSVASTSTP…PKTSKNNPKT (94 aa). The segment at 40–135 is disordered; it reads VSSVASTSTP…TSKNNPKTQE (96 aa). Residues 147–167 traverse the membrane as a helical segment; the sequence is GILYLFILLLIIFVIILICFI.

The protein resides in the host membrane. This is an uncharacterized protein from Equine herpesvirus 2 (strain 86/87) (EHV-2).